A 200-amino-acid chain; its full sequence is Dephospho-CoA kinase (200 aa).

Residues Val4–Asp200 enclose the DPCK domain. Ala12 to Thr17 contributes to the ATP binding site.

It belongs to the CoaE family.

The protein resides in the cytoplasm. The catalysed reaction is 3'-dephospho-CoA + ATP = ADP + CoA + H(+). The protein operates within cofactor biosynthesis; coenzyme A biosynthesis; CoA from (R)-pantothenate: step 5/5. Its function is as follows. Catalyzes the phosphorylation of the 3'-hydroxyl group of dephosphocoenzyme A to form coenzyme A. The protein is Dephospho-CoA kinase of Bacillus cereus (strain ATCC 14579 / DSM 31 / CCUG 7414 / JCM 2152 / NBRC 15305 / NCIMB 9373 / NCTC 2599 / NRRL B-3711).